The sequence spans 534 residues: Probable bifunctional tRNA threonylcarbamoyladenosine biosynthesis protein (534 aa).

The tract at residues 1–324 (MICLGIEGTA…YRTDQVEVTW (324 aa)) is kae1. 3 residues coordinate Fe cation: His108, His112, and Tyr129. L-threonylcarbamoyladenylate contacts are provided by residues 129–133 (YTSGG), Asp161, Gly174, Glu178, and Asn258. Asp286 provides a ligand contact to Fe cation. The Protein kinase domain occupies 335–534 (LPDNIKEKGA…DEIEKRGRYL (200 aa)). Residues 340-348 (KEKGAEADI) and Lys361 contribute to the ATP site. The active-site Proton acceptor; for kinase activity is the Asp455.

This sequence in the N-terminal section; belongs to the KAE1 / TsaD family. It in the C-terminal section; belongs to the protein kinase superfamily. Tyr protein kinase family. BUD32 subfamily. Component of the KEOPS complex that consists of Kae1, Bud32, Cgi121 and Pcc1; the whole complex dimerizes. It depends on Fe(2+) as a cofactor.

Its subcellular location is the cytoplasm. It carries out the reaction L-seryl-[protein] + ATP = O-phospho-L-seryl-[protein] + ADP + H(+). The enzyme catalyses L-threonyl-[protein] + ATP = O-phospho-L-threonyl-[protein] + ADP + H(+). The catalysed reaction is L-threonylcarbamoyladenylate + adenosine(37) in tRNA = N(6)-L-threonylcarbamoyladenosine(37) in tRNA + AMP + H(+). Its function is as follows. Required for the formation of a threonylcarbamoyl group on adenosine at position 37 (t(6)A37) in tRNAs that read codons beginning with adenine. Is a component of the KEOPS complex that is probably involved in the transfer of the threonylcarbamoyl moiety of threonylcarbamoyl-AMP (TC-AMP) to the N6 group of A37. The Kae1 domain likely plays a direct catalytic role in this reaction. The Bud32 domain probably displays kinase activity that regulates Kae1 function. The sequence is that of Probable bifunctional tRNA threonylcarbamoyladenosine biosynthesis protein from Methanosphaera stadtmanae (strain ATCC 43021 / DSM 3091 / JCM 11832 / MCB-3).